We begin with the raw amino-acid sequence, 462 residues long: Cathepsin F (462 aa).

An N-terminal signal peptide occupies residues 1–19 (MAPLLQLLWLLTLLSTVAL). Residues 20–248 (SPVPAKPWAD…MSPAKSINDL (229 aa)) constitute a propeptide, activation peptide. N-linked (GlcNAc...) asparagine glycosylation is found at N35, N138, and N173. Cystine bridges form between C270-C311 and C304-C344. Residue C273 is part of the active site. Residues N345 and N356 are each glycosylated (N-linked (GlcNAc...) asparagine). The cysteines at positions 402 and 450 are disulfide-linked. H409 is a catalytic residue. A glycan (N-linked (GlcNAc...) asparagine) is linked at N418. N429 is an active-site residue.

This sequence belongs to the peptidase C1 family.

The protein localises to the lysosome. The catalysed reaction is The recombinant enzyme cleaves synthetic substrates with Phe and Leu (better than Val) in P2, with high specificity constant (kcat/Km) comparable to that of cathepsin L.. Thiol protease which is believed to participate in intracellular degradation and turnover of proteins. Has also been implicated in tumor invasion and metastasis. This chain is Cathepsin F (Ctsf), found in Mus musculus (Mouse).